The chain runs to 360 residues: Phospho-N-acetylmuramoyl-pentapeptide-transferase (360 aa).

10 consecutive transmembrane segments (helical) span residues 25–45, 73–93, 97–117, 135–155, 170–190, 199–219, 236–256, 263–283, 288–308, and 338–358; these read RGIL…PWMI, TMGG…WADL, YVWV…VDDY, FWQS…APSA, IPLG…SSNA, GLAI…CYLS, AGEL…FLWF, VFMG…MAVI, IVLF…VIQV, and VIVR…ATLK.

The protein belongs to the glycosyltransferase 4 family. MraY subfamily. Requires Mg(2+) as cofactor.

The protein localises to the cell inner membrane. The catalysed reaction is UDP-N-acetyl-alpha-D-muramoyl-L-alanyl-gamma-D-glutamyl-meso-2,6-diaminopimeloyl-D-alanyl-D-alanine + di-trans,octa-cis-undecaprenyl phosphate = di-trans,octa-cis-undecaprenyl diphospho-N-acetyl-alpha-D-muramoyl-L-alanyl-D-glutamyl-meso-2,6-diaminopimeloyl-D-alanyl-D-alanine + UMP. Its pathway is cell wall biogenesis; peptidoglycan biosynthesis. Catalyzes the initial step of the lipid cycle reactions in the biosynthesis of the cell wall peptidoglycan: transfers peptidoglycan precursor phospho-MurNAc-pentapeptide from UDP-MurNAc-pentapeptide onto the lipid carrier undecaprenyl phosphate, yielding undecaprenyl-pyrophosphoryl-MurNAc-pentapeptide, known as lipid I. This is Phospho-N-acetylmuramoyl-pentapeptide-transferase from Pseudomonas savastanoi pv. phaseolicola (strain 1448A / Race 6) (Pseudomonas syringae pv. phaseolicola (strain 1448A / Race 6)).